The primary structure comprises 122 residues: Large ribosomal subunit protein uL14 (122 aa).

Belongs to the universal ribosomal protein uL14 family. In terms of assembly, part of the 50S ribosomal subunit. Forms a cluster with proteins L3 and L19. In the 70S ribosome, L14 and L19 interact and together make contacts with the 16S rRNA in bridges B5 and B8.

In terms of biological role, binds to 23S rRNA. Forms part of two intersubunit bridges in the 70S ribosome. The protein is Large ribosomal subunit protein uL14 of Sphingopyxis alaskensis (strain DSM 13593 / LMG 18877 / RB2256) (Sphingomonas alaskensis).